The chain runs to 199 residues: Chromophore lyase CpcT/CpeT 2 (199 aa).

This sequence belongs to the CpcT/CpeT biliprotein lyase family.

Its function is as follows. Covalently attaches a chromophore to Cys residue(s) of phycobiliproteins. This chain is Chromophore lyase CpcT/CpeT 2, found in Synechococcus sp. (strain JA-3-3Ab) (Cyanobacteria bacterium Yellowstone A-Prime).